The sequence spans 453 residues: MTYFPHTPQEIKEMLNTIGLESIEDLFSEIPEEIRQKAKENFKIPASPSEIDLLEEIKNIARKNIGKDYISFLGGGAYKHYIPPFVKLVSLFPTFYTAYTPYQPEISQGVLQSIFEYQSLICDLTGMEVANASLYEAGSGIAEAALMSVRITGKKEVIASSGLNPEYISVLKTYLQAQNIELKIIPLDEKGETDVDFLEKNISPKTSGVIIQNPNFFGVIETKLKDIEELIHKNNALFILSIYPISLGILKPPSEYNVDIVVGEGQSLGIPLGFGGPYLGILATKKEFIRQIPGRIVGETIDLEGERGFVNTLQTREQHIRRAKATSNICTNEALSAISAAVYMAILGKKGIKKIAEVCFSRAHYLRERMQKEVNLEITYPNSHFFNEFVIKIPENSENFLKKLEEKKILGGIPLSRFYKDRDKEILVAVTERNSLEELEYYIKSLKEVLKKN.

It belongs to the GcvP family. N-terminal subunit subfamily. The glycine cleavage system is composed of four proteins: P, T, L and H. In this organism, the P 'protein' is a heterodimer of two subunits.

The enzyme catalyses N(6)-[(R)-lipoyl]-L-lysyl-[glycine-cleavage complex H protein] + glycine + H(+) = N(6)-[(R)-S(8)-aminomethyldihydrolipoyl]-L-lysyl-[glycine-cleavage complex H protein] + CO2. In terms of biological role, the glycine cleavage system catalyzes the degradation of glycine. The P protein binds the alpha-amino group of glycine through its pyridoxal phosphate cofactor; CO(2) is released and the remaining methylamine moiety is then transferred to the lipoamide cofactor of the H protein. The polypeptide is Probable glycine dehydrogenase (decarboxylating) subunit 1 (Dictyoglomus thermophilum (strain ATCC 35947 / DSM 3960 / H-6-12)).